The following is a 232-amino-acid chain: Pseudaminic acid cytidylyltransferase (232 aa).

The protein belongs to the CMP-NeuNAc synthase family. Mg(2+) serves as cofactor.

It catalyses the reaction pseudaminate + CTP = CMP-pseudaminate + diphosphate. In terms of biological role, catalyzes the final step in the biosynthesis of pseudaminic acid, a sialic-acid-like sugar that is used to modify flagellin. Mediates the activation of pseudaminic acid with CMP by forming CMP-pseudaminic acid. This chain is Pseudaminic acid cytidylyltransferase (pseF), found in Campylobacter jejuni subsp. jejuni serotype O:2 (strain ATCC 700819 / NCTC 11168).